A 391-amino-acid polypeptide reads, in one-letter code: Phosphoglycerate kinase (391 aa).

Substrate is bound by residues 21–23 (DLN), arginine 36, 59–62 (HLGR), arginine 113, and arginine 146. ATP is bound by residues lysine 197, glutamate 319, and 345–348 (GGDT).

Belongs to the phosphoglycerate kinase family. As to quaternary structure, monomer.

Its subcellular location is the cytoplasm. It carries out the reaction (2R)-3-phosphoglycerate + ATP = (2R)-3-phospho-glyceroyl phosphate + ADP. It participates in carbohydrate degradation; glycolysis; pyruvate from D-glyceraldehyde 3-phosphate: step 2/5. The sequence is that of Phosphoglycerate kinase from Xylella fastidiosa (strain 9a5c).